The chain runs to 110 residues: UPF0122 protein SERP0802 (110 aa).

It belongs to the UPF0122 family.

Its function is as follows. Might take part in the signal recognition particle (SRP) pathway. This is inferred from the conservation of its genetic proximity to ftsY/ffh. May be a regulatory protein. The polypeptide is UPF0122 protein SERP0802 (Staphylococcus epidermidis (strain ATCC 35984 / DSM 28319 / BCRC 17069 / CCUG 31568 / BM 3577 / RP62A)).